Consider the following 181-residue polypeptide: Alkyl hydroperoxide reductase AhpD (181 aa).

Residue cysteine 131 is the Proton donor of the active site. Cysteine 131 and cysteine 134 are joined by a disulfide. Catalysis depends on cysteine 134, which acts as the Cysteine sulfenic acid (-SOH) intermediate.

Belongs to the AhpD family.

It catalyses the reaction N(6)-[(R)-dihydrolipoyl]-L-lysyl-[lipoyl-carrier protein] + a hydroperoxide = N(6)-[(R)-lipoyl]-L-lysyl-[lipoyl-carrier protein] + an alcohol + H2O. Functionally, antioxidant protein with alkyl hydroperoxidase activity. Required for the reduction of the AhpC active site cysteine residues and for the regeneration of the AhpC enzyme activity. This chain is Alkyl hydroperoxide reductase AhpD, found in Rhodopseudomonas palustris (strain BisA53).